The following is a 432-amino-acid chain: Alpha-ketoglutarate permease (432 aa).

Residues 1-32 (MAESTVTADSKLTSSDTRRRIWAIVGASSGNL) lie on the Cytoplasmic side of the membrane. The helical transmembrane segment at 33-53 (VEWFDFYVYSFCSLYFAHIFF) threads the bilayer. Topologically, residues 54 to 62 (PSGNTTTQL) are periplasmic. The helical transmembrane segment at 63-83 (LQTAGVFAAGFLMRPIGGWLF) threads the bilayer. The Cytoplasmic portion of the chain corresponds to 84–95 (GRIADKHGRKKS). Residues 96–116 (MLLSVCMMCFGSLVIACLPGY) traverse the membrane as a helical segment. The Periplasmic portion of the chain corresponds to 117-118 (ET). The helical transmembrane segment at 119–139 (IGTWAPALLLLARLFQGLSVG) threads the bilayer. The Cytoplasmic portion of the chain corresponds to 140 to 162 (GEYGTSATYMSEVAVEGRKGFYA). Residues 163–183 (SFQYVTLIGGQLLALLVVVVL) form a helical membrane-spanning segment. Residues 184-193 (QHTMEDAALR) are Periplasmic-facing. A helical membrane pass occupies residues 194–214 (EWGWRIPFALGAVLAVVALWL). Residues 215-243 (RRQLDETSQQETRALKEAGSLKGLWRNRR) are Cytoplasmic-facing. The helical transmembrane segment at 244–264 (AFIMVLGFTAAGSLCFYTFTT) threads the bilayer. Topologically, residues 265–279 (YMQKYLVNTAGMHAN) are periplasmic. A helical membrane pass occupies residues 280–300 (VASGIMTAALFVFMLIQPLIG). Residues 301–309 (ALSDKIGRR) lie on the Cytoplasmic side of the membrane. The chain crosses the membrane as a helical span at residues 310–330 (TSMLCFGSLAAIFTVPILSAL). At 331-339 (QNVSSPYAA) the chain is on the periplasmic side. A helical membrane pass occupies residues 340 to 360 (FGLVMCALLIVSFYTSISGIL). Topologically, residues 361-373 (KAEMFPAQVRALG) are cytoplasmic. The helical transmembrane segment at 374–394 (VGLSYAVANAIFGGSAEYVAL) threads the bilayer. The Periplasmic segment spans residues 395–402 (SLKSIGME). The helical transmembrane segment at 403 to 423 (TAFFWYVTLMAVVAFLVSLML) threads the bilayer. Topologically, residues 424–432 (HRKGKGMRL) are cytoplasmic.

It belongs to the major facilitator superfamily. Metabolite:H+ Symporter (MHS) family (TC 2.A.1.6) family.

The protein resides in the cell inner membrane. Functionally, uptake of alpha-ketoglutarate across the boundary membrane with the concomitant import of a cation (symport system). This Escherichia coli (strain K12) protein is Alpha-ketoglutarate permease (kgtP).